Consider the following 245-residue polypeptide: Probable ABC transporter permease protein HI_0355 (245 aa).

The next 6 helical transmembrane spans lie at 9 to 29, 61 to 81, 92 to 112, 115 to 135, 170 to 190, and 217 to 237; these read LLIV…GSFP, ICLG…LLSF, ILVI…VLWF, GMAS…TAAC, LPAF…GAVV, and FAAL…IDWL. One can recognise an ABC transmembrane type-1 domain in the interval 50–234; it reads LWQHTQVTLL…SISLCLYFSI (185 aa).

The protein belongs to the binding-protein-dependent transport system permease family. CysTW subfamily.

Its subcellular location is the cell inner membrane. Its function is as follows. Probably part of a binding-protein-dependent transport system. Probably responsible for the translocation of the substrate across the membrane. The polypeptide is Probable ABC transporter permease protein HI_0355 (Haemophilus influenzae (strain ATCC 51907 / DSM 11121 / KW20 / Rd)).